We begin with the raw amino-acid sequence, 951 residues long: Valine--tRNA ligase (951 aa).

The short motif at 42–52 (PNVTGSLHMGH) is the 'HIGH' region element. Residues 554–558 (KMSKS) carry the 'KMSKS' region motif. Lys557 lines the ATP pocket. Positions 880–944 (AGLINKEDEL…AEAKAKLIEQ (65 aa)) form a coiled coil.

Belongs to the class-I aminoacyl-tRNA synthetase family. ValS type 1 subfamily. Monomer.

It localises to the cytoplasm. It carries out the reaction tRNA(Val) + L-valine + ATP = L-valyl-tRNA(Val) + AMP + diphosphate. Its function is as follows. Catalyzes the attachment of valine to tRNA(Val). As ValRS can inadvertently accommodate and process structurally similar amino acids such as threonine, to avoid such errors, it has a 'posttransfer' editing activity that hydrolyzes mischarged Thr-tRNA(Val) in a tRNA-dependent manner. The polypeptide is Valine--tRNA ligase (Shigella dysenteriae serotype 1 (strain Sd197)).